Here is a 377-residue protein sequence, read N- to C-terminus: 8-amino-7-oxononanoate synthase (377 aa).

Arg13 provides a ligand contact to substrate. Pyridoxal 5'-phosphate is bound at residue Gly100–Tyr101. A substrate-binding site is contributed by His125. Residues Ser171, His199, and Thr228 each contribute to the pyridoxal 5'-phosphate site. The residue at position 231 (Lys231) is an N6-(pyridoxal phosphate)lysine. Thr345 serves as a coordination point for substrate.

It belongs to the class-II pyridoxal-phosphate-dependent aminotransferase family. BioF subfamily. Homodimer. Requires pyridoxal 5'-phosphate as cofactor.

It carries out the reaction 6-carboxyhexanoyl-[ACP] + L-alanine + H(+) = (8S)-8-amino-7-oxononanoate + holo-[ACP] + CO2. The protein operates within cofactor biosynthesis; biotin biosynthesis. Functionally, catalyzes the decarboxylative condensation of pimeloyl-[acyl-carrier protein] and L-alanine to produce 8-amino-7-oxononanoate (AON), [acyl-carrier protein], and carbon dioxide. The polypeptide is 8-amino-7-oxononanoate synthase (Nitrosococcus oceani (strain ATCC 19707 / BCRC 17464 / JCM 30415 / NCIMB 11848 / C-107)).